A 189-amino-acid polypeptide reads, in one-letter code: Cytidylate kinase (189 aa).

7 to 15 contacts ATP; the sequence is GPPGSGKTS.

It belongs to the cytidylate kinase family. Type 2 subfamily.

Its subcellular location is the cytoplasm. It catalyses the reaction CMP + ATP = CDP + ADP. The enzyme catalyses dCMP + ATP = dCDP + ADP. In Saccharolobus islandicus (strain L.S.2.15 / Lassen #1) (Sulfolobus islandicus), this protein is Cytidylate kinase.